An 878-amino-acid chain; its full sequence is Calcium-transporting ATPase 1 (878 aa).

Transmembrane regions (helical) follow at residues 50–72, 76–95, 243–263, and 281–301; these read LFID…VQLF, FVES…VAVV, LGWV…LRLF, and FAVA…VTIV. Ca(2+)-binding residues include Val-287, Ala-288, Ile-290, and Glu-292. Residue Asp-334 is the 4-aspartylphosphate intermediate of the active site. The next 6 helical transmembrane spans lie at 681-701, 704-724, 753-773, 779-799, 816-836, and 845-865; these read LFSG…VGWV, FTAL…AIAL, VILI…YVGQ, MGVA…TFAA, YVLM…LPFL, and AFGW…VICM. Residues Asn-713 and Asp-717 each coordinate Ca(2+).

Belongs to the cation transport ATPase (P-type) (TC 3.A.3) family. Type IIA subfamily.

It localises to the cell membrane. It catalyses the reaction Ca(2+)(in) + ATP + H2O = Ca(2+)(out) + ADP + phosphate + H(+). Its activity is regulated as follows. Inhibited by very high concentrations of cyclopiazonic acid (CPA). In terms of biological role, catalyzes the hydrolysis of ATP coupled with the transport of calcium. This chain is Calcium-transporting ATPase 1 (yoaB), found in Lactococcus lactis subsp. lactis (strain IL1403) (Streptococcus lactis).